The chain runs to 593 residues: Protein PSP2 (593 aa).

Basic and acidic residues predominate over residues 56–65; the sequence is AGEHQRDGHQ. Residues 56–101 are disordered; that stretch reads AGEHQRDGHQQHPHGGHGPMNRSRFSNAGPFGGGSMGDFANHHHPL. 2 positions are modified to phosphoserine: Ser-150 and Ser-238. Disordered regions lie at residues 227 to 248 and 280 to 593; these read KPFI…KPVD and DSMA…DMPL. Polar residues-rich tracts occupy residues 231 to 241 and 280 to 290; these read TKTQRSKSNPF and DSMATTATGSK. Ser-340 is modified (phosphoserine). The span at 347–402 shows a compositional bias: basic and acidic residues; the sequence is SKPDKSDEFKGGDEQGFEKGGDDKAQLDVSNDKDKGSETDVDKQFTFKNVEREHSM. Residues 408-426 show a composition bias toward low complexity; the sequence is NGNHNNNNGNFRGSNRYRG. An omega-N-methylarginine mark is found at Arg-419, Arg-425, and Arg-440. Dimethylated arginine is present on Arg-443. Omega-N-methylarginine is present on Arg-447. Residues 449-477 are compositionally biased toward low complexity; it reads GSSYNNNNNNTNDNNNNNNNSSSNNNNGS. 2 stretches are compositionally biased toward polar residues: residues 486-497 and 505-516; these read EEGLTSDSSLDA and FTNSTSNTQQYS. Ser-522 is modified (phosphoserine). Positions 534–545 are enriched in low complexity; sequence RNNGRGNYNSSG. Residues Arg-538, Arg-551, and Arg-575 each carry the omega-N-methylarginine modification. Gly residues predominate over residues 546-563; it reads MNGGSRGRGFGRGRGFGR. A compositionally biased stretch (low complexity) spans 578–587; it reads SGNYSNYNNR.

Its subcellular location is the cytoplasm. The protein localises to the P-body. It localises to the stress granule. In terms of biological role, DNA polymerase alpha mutation suppressor. Suppressor of group II intron splicing defects of a mutation in MRS2. May play a role in mitochondrial mRNA splicing. The protein is Protein PSP2 of Saccharomyces cerevisiae (strain ATCC 204508 / S288c) (Baker's yeast).